Consider the following 966-residue polypeptide: Phosphoenolpyruvate carboxylase (966 aa).

Phosphoserine is present on serine 10. Catalysis depends on residues histidine 171 and lysine 601.

It belongs to the PEPCase type 1 family. In terms of assembly, homotetramer. Mg(2+) serves as cofactor.

It localises to the cytoplasm. The enzyme catalyses oxaloacetate + phosphate = phosphoenolpyruvate + hydrogencarbonate. With respect to regulation, by light-reversible phosphorylation. In terms of biological role, through the carboxylation of phosphoenolpyruvate (PEP) it forms oxaloacetate, a four-carbon dicarboxylic acid source for the tricarboxylic acid cycle. In Medicago sativa (Alfalfa), this protein is Phosphoenolpyruvate carboxylase (PEPC).